Consider the following 265-residue polypeptide: Very long chain fatty acid elongase 6 (265 aa).

Residue asparagine 2 is glycosylated (N-linked (GlcNAc...) asparagine). 7 helical membrane-spanning segments follow: residues 34 to 51 (FLFS…RHLM), 70 to 90 (LAVF…YILM), 111 to 131 (FWAY…IFII), 137 to 156 (LIFL…WYSY), 159 to 179 (MVAG…VMYS), 197 to 217 (FITL…YLVF), and 232 to 252 (IIWS…FFFE).

This sequence belongs to the ELO family. ELOVL6 subfamily. Post-translationally, N-Glycosylated.

Its subcellular location is the endoplasmic reticulum membrane. The catalysed reaction is a very-long-chain acyl-CoA + malonyl-CoA + H(+) = a very-long-chain 3-oxoacyl-CoA + CO2 + CoA. It carries out the reaction hexadecanoyl-CoA + malonyl-CoA + H(+) = 3-oxooctadecanoyl-CoA + CO2 + CoA. It catalyses the reaction (9Z)-hexadecenoyl-CoA + malonyl-CoA + H(+) = 3-oxo-(11Z)-octadecenoyl-CoA + CO2 + CoA. The enzyme catalyses dodecanoyl-CoA + malonyl-CoA + H(+) = 3-oxotetradecanoyl-CoA + CO2 + CoA. The catalysed reaction is tetradecanoyl-CoA + malonyl-CoA + H(+) = 3-oxohexadecanoyl-CoA + CO2 + CoA. It carries out the reaction (9Z)-octadecenoyl-CoA + malonyl-CoA + H(+) = 3-oxo-(11Z)-eicosenoyl-CoA + CO2 + CoA. It catalyses the reaction (9Z,12Z)-octadecadienoyl-CoA + malonyl-CoA + H(+) = (11Z,14Z)-3-oxoicosa-11,14-dienoyl-CoA + CO2 + CoA. The enzyme catalyses (9Z,12Z,15Z)-octadecatrienoyl-CoA + malonyl-CoA + H(+) = (11Z,14Z,17Z)-3-oxoeicosatrienoyl-CoA + CO2 + CoA. It participates in lipid metabolism; fatty acid biosynthesis. With respect to regulation, the reaction is stimulated by the presence of HSD17B12, the enzyme catalyzing the second step of the elongation cycle. Functionally, catalyzes the first and rate-limiting reaction of the four reactions that constitute the long-chain fatty acids elongation cycle. This endoplasmic reticulum-bound enzymatic process allows the addition of 2 carbons to the chain of long- and very long-chain fatty acids (VLCFAs) per cycle. Condensing enzyme that elongates fatty acids with 12, 14 and 16 carbons with higher activity toward C16:0 acyl-CoAs. Catalyzes the synthesis of unsaturated C16 long chain fatty acids and, to a lesser extent, C18:0 and those with low desaturation degree. May participate in the production of saturated and monounsaturated VLCFAs of different chain lengths that are involved in multiple biological processes as precursors of membrane lipids and lipid mediators. The polypeptide is Very long chain fatty acid elongase 6 (Gallus gallus (Chicken)).